A 180-amino-acid polypeptide reads, in one-letter code: Negative modulator of initiation of replication (180 aa).

Interaction with DNA stretches follow at residues 86–87 (AV), 115–119 (RTRVY), and 149–155 (NTNTGRK).

Belongs to the SeqA family. Homodimer. Polymerizes to form helical filaments.

The protein localises to the cytoplasm. In terms of biological role, negative regulator of replication initiation, which contributes to regulation of DNA replication and ensures that replication initiation occurs exactly once per chromosome per cell cycle. Binds to pairs of hemimethylated GATC sequences in the oriC region, thus preventing assembly of replication proteins and re-initiation at newly replicated origins. Repression is relieved when the region becomes fully methylated. The chain is Negative modulator of initiation of replication from Salmonella typhimurium (strain LT2 / SGSC1412 / ATCC 700720).